The following is a 320-amino-acid chain: Pyrroline-5-carboxylate reductase 2 (320 aa).

N-acetylserine is present on Ser-2. NADP(+)-binding positions include 6–11 (IGAGQL) and Ser-34. NADPH is bound by residues Ala-8, Gln-10, Leu-11, Ser-34, Glu-36, Asn-56, Val-70, Lys-71, and Ala-97. Residues Asn-56, 69 to 72 (AVKP), and 95 to 97 (CAA) each bind NADP(+). Glu-164 serves as a coordination point for L-proline. Asn-230 is a binding site for NADPH. The L-proline site is built by Ala-237 and Thr-238. The segment covering 295–305 (PTVSTLTPSSP) has biased composition (low complexity). Positions 295-320 (PTVSTLTPSSPGKLLTRSLALGGKKD) are disordered. Position 304 is a phosphoserine (Ser-304).

This sequence belongs to the pyrroline-5-carboxylate reductase family. As to quaternary structure, homodecamer; composed of 5 homodimers. Interacts with LTO1.

Its subcellular location is the cytoplasm. It is found in the mitochondrion. The enzyme catalyses L-proline + NADP(+) = (S)-1-pyrroline-5-carboxylate + NADPH + 2 H(+). The catalysed reaction is L-proline + NAD(+) = (S)-1-pyrroline-5-carboxylate + NADH + 2 H(+). It participates in amino-acid biosynthesis; L-proline biosynthesis; L-proline from L-glutamate 5-semialdehyde: step 1/1. In terms of biological role, oxidoreductase that catalyzes the last step in proline biosynthesis, which corresponds to the reduction of pyrroline-5-carboxylate to L-proline using NAD(P)H. At physiologic concentrations, has higher specific activity in the presence of NADH. Involved in cellular response to oxidative stress. In some cell types, such as erythrocytes, its primary function may be the generation of NADP(+). In Macaca fascicularis (Crab-eating macaque), this protein is Pyrroline-5-carboxylate reductase 2 (PYCR2).